The chain runs to 225 residues: Small ribosomal subunit protein uS3 (225 aa).

Positions 38–106 (LRGHLRKKLS…DVALNIVEIR (69 aa)) constitute a KH type-2 domain.

Belongs to the universal ribosomal protein uS3 family. As to quaternary structure, part of the 30S ribosomal subunit. Forms a tight complex with proteins S10 and S14.

In terms of biological role, binds the lower part of the 30S subunit head. Binds mRNA in the 70S ribosome, positioning it for translation. This Granulibacter bethesdensis (strain ATCC BAA-1260 / CGDNIH1) protein is Small ribosomal subunit protein uS3.